We begin with the raw amino-acid sequence, 247 residues long: Adenosylcobinamide-GDP ribazoletransferase (247 aa).

5 consecutive transmembrane segments (helical) span residues 34-54 (IITF…VFMV), 59-79 (CGVP…TGGF), 113-133 (GGLA…ELAL), 138-158 (ILAS…LLMY), and 194-214 (VLLP…AIFI).

Belongs to the CobS family. Mg(2+) is required as a cofactor.

The protein resides in the cell inner membrane. It catalyses the reaction alpha-ribazole + adenosylcob(III)inamide-GDP = adenosylcob(III)alamin + GMP + H(+). It carries out the reaction alpha-ribazole 5'-phosphate + adenosylcob(III)inamide-GDP = adenosylcob(III)alamin 5'-phosphate + GMP + H(+). The protein operates within cofactor biosynthesis; adenosylcobalamin biosynthesis; adenosylcobalamin from cob(II)yrinate a,c-diamide: step 7/7. Its function is as follows. Joins adenosylcobinamide-GDP and alpha-ribazole to generate adenosylcobalamin (Ado-cobalamin). Also synthesizes adenosylcobalamin 5'-phosphate from adenosylcobinamide-GDP and alpha-ribazole 5'-phosphate. This chain is Adenosylcobinamide-GDP ribazoletransferase, found in Escherichia coli O7:K1 (strain IAI39 / ExPEC).